The chain runs to 447 residues: UDP-N-acetylmuramate--L-alanine ligase (447 aa).

Gly-108–Ser-114 lines the ATP pocket.

The protein belongs to the MurCDEF family.

The protein resides in the cytoplasm. The catalysed reaction is UDP-N-acetyl-alpha-D-muramate + L-alanine + ATP = UDP-N-acetyl-alpha-D-muramoyl-L-alanine + ADP + phosphate + H(+). The protein operates within cell wall biogenesis; peptidoglycan biosynthesis. Functionally, cell wall formation. The protein is UDP-N-acetylmuramate--L-alanine ligase of Listeria monocytogenes serotype 4a (strain HCC23).